The following is a 1249-amino-acid chain: MAQTNGELEHSKAETPEQLTNGNHPEETQEEEQNGGLFQISVKLPHEPYKIQVMVSSQEQVQDVRQSIVELPSTFQYTCFHLEFNGKRINDFVELSEVPDLKADSEIVLVEDPYTEKESRMHVIRMRELVGAAGDRVDNLQGISAGLSLHDSISEEAAAGETTEKEHSLSKYDIAGSPSLNTILPKAEAPLPKTVKSISLSPWNPVPYHLRQKGHLLYLQVTTNEGEQFQITSHVSGFFVNKCSNARFDPFPKPMPKKGSAHSLLTLISHLSPSFTTSFEALQEANNKKDLLTTFPFQNAIPNSPWLVAPPSSSVNAHQPDITRSQENYLISGVDNAETLRDWNEEFQTTRELPRDTVQDRVFRERLTSKLFADYNEAAARGAVLVAKGEVAPLNPTEDRDAQIFVYNNIFYSFGADGVGTFASEGGDEAARVAVGKDVVGIKAVNQLDINGLFTPGTVVVDYLGKRIVGQSIVPGIFKQREPGEHQIDYGGVEGKDVVATHPDFVPVFEKLSKALRIKKHAVWDKDGKRHDLEGSVETKGLLGTDGRKYVLDLYRVTPLDVMWQEEEGSDAYPHNMSVLRLELVESYWRHKMSQYVKAEVERRRAAKAVETASKEKSEENAESKEEGSEEKSEEALDQERVDISGFSLALNPDVCSGQIPQTDEEKEQWAQDEKEVRETCDFLRSKVMPELIQDLHDGDVGFPMDGQSLSQLLHKRGINIRYLGKLAQMSKEKGARLDALTLLLVQEMIARAFKHIANSYLRNVAAPFTASCIAHLLNCLLGADVNSNPQADIDASLREIYPEADFSFEKVTPTTLRAEIEKHVSTRYRYTPEPEWFNSLRHLQLLRDISIKLGLQLSAREYAFAKSQLPAKVPATNGASQEEGKKKKKKGGDSKSPARAASPEKPAVSIVPDDIVNIVPLVKDASPRSSLAEEALEAGRISLMQNQKQLGQELILESLSLHEQIYGILHPEVAKLYHQLSMLYYQTDEKEAAVELARKAVIVTERTLGVDSADTILSYLNLSLFEHASGNTKTALVYIKHAMDLWKIIYGPNHPDSITTMNNAAVMLQHLKQYSDSRKWFEASLTVCESLFGRQSINTATILFQLAQALALDQDSKGAVGKMRDAYNIFLSQLGPEDRNTKEAETWLEQLTQNAVSIAKHAKDIQARRLRRINMNTRTLGTKVQPQVGQSAPSASGASSANPSLDSRSIDELLKFIEGGDTSSSRTKQKKRAAASNPKLRGSKKSSA.

The interval 1–34 (MAQTNGELEHSKAETPEQLTNGNHPEETQEEEQN) is disordered. The Clu domain occupies 321 to 565 (DITRSQENYL…RVTPLDVMWQ (245 aa)). Disordered stretches follow at residues 610–638 (VETA…EALD) and 874–907 (VPAT…PEKP). The segment covering 613 to 638 (ASKEKSEENAESKEEGSEEKSEEALD) has biased composition (basic and acidic residues). 3 TPR repeats span residues 975 to 1008 (AKLY…TERT), 1017 to 1050 (ILSY…WKII), and 1059 to 1092 (ITTM…CESL). Polar residues predominate over residues 1178–1191 (TRTLGTKVQPQVGQ). Residues 1178 to 1249 (TRTLGTKVQP…KLRGSKKSSA (72 aa)) form a disordered region. The segment covering 1192–1205 (SAPSASGASSANPS) has biased composition (low complexity).

It belongs to the CLU family. In terms of assembly, may associate with the eukaryotic translation initiation factor 3 (eIF-3) complex.

The protein localises to the cytoplasm. Its function is as follows. mRNA-binding protein involved in proper cytoplasmic distribution of mitochondria. The protein is Clustered mitochondria protein homolog of Aspergillus oryzae (strain ATCC 42149 / RIB 40) (Yellow koji mold).